A 439-amino-acid polypeptide reads, in one-letter code: MSDPKKLFIKTYGCQMNVYDSERMAEALGGQGYVETQSAEDADMILLNTCHIREKAAEKVYSELGRFKGLKAAKPDLKIGVAGCVAQAEGEEIMRRQPLVDLVVGPQSYHRLPELEAKTRAGEKALDTDFPEEDKFEKLKGRPKAKRGPTAFLTVQEGCDKFCAFCVVPYTRGAEVSRPADRILREANELVERGVREITLLGQNVNAYHGAGPNGDMTLAGLIWELDKIDGLERIRFTTSHPNDMADDLIEAHGTCAKLMPYLHLPVQAGSDKILKRMNRSHTAESYLRLIERIRAARPDIVMSGDFIVGFPEETEADFQDTLDLVEQVRYGYAYSFKYSTRPGTPAAERAQVDPAEADDRLQRLQAVITRHQREIQDGMVGREVSVLFEKPGRQPGQMVGKSEYLHAVHVQDPGLEAGQIARVRIVASGANSLAGELA.

Residues 5 to 121 (KKLFIKTYGC…LPELEAKTRA (117 aa)) enclose the MTTase N-terminal domain. [4Fe-4S] cluster is bound by residues cysteine 14, cysteine 50, cysteine 84, cysteine 159, cysteine 163, and cysteine 166. A Radical SAM core domain is found at 145–378 (AKRGPTAFLT…ITRHQREIQD (234 aa)). The TRAM domain maps to 378–439 (DGMVGREVSV…GANSLAGELA (62 aa)).

This sequence belongs to the methylthiotransferase family. MiaB subfamily. As to quaternary structure, monomer. [4Fe-4S] cluster is required as a cofactor.

The protein localises to the cytoplasm. It catalyses the reaction N(6)-dimethylallyladenosine(37) in tRNA + (sulfur carrier)-SH + AH2 + 2 S-adenosyl-L-methionine = 2-methylsulfanyl-N(6)-dimethylallyladenosine(37) in tRNA + (sulfur carrier)-H + 5'-deoxyadenosine + L-methionine + A + S-adenosyl-L-homocysteine + 2 H(+). Catalyzes the methylthiolation of N6-(dimethylallyl)adenosine (i(6)A), leading to the formation of 2-methylthio-N6-(dimethylallyl)adenosine (ms(2)i(6)A) at position 37 in tRNAs that read codons beginning with uridine. In Ruegeria pomeroyi (strain ATCC 700808 / DSM 15171 / DSS-3) (Silicibacter pomeroyi), this protein is tRNA-2-methylthio-N(6)-dimethylallyladenosine synthase.